A 914-amino-acid chain; its full sequence is Thyroid peroxidase (914 aa).

The first 31 residues, 1–31 (MRTLGAMAIMLVVMGTVIFLSFILRSRDILC), serve as a signal peptide directing secretion. At 32–834 (GKTMKSHVIS…TCIDSGRLPR (803 aa)) the chain is on the extracellular side. A glycan (N-linked (GlcNAc...) asparagine) is linked at Asn123. Cysteines 136 and 152 form a disulfide. Asp232 contributes to the heme b binding site. Catalysis depends on His233, which acts as the Proton acceptor. A Ca(2+)-binding site is contributed by Asp234. 2 cysteine pairs are disulfide-bonded: Cys253–Cys263 and Cys257–Cys278. N-linked (GlcNAc...) asparagine glycans are attached at residues Asn271 and Asn299. The Ca(2+) site is built by Thr313, Phe315, Asp317, and Ser319. The N-linked (GlcNAc...) asparagine glycan is linked to Asn334. Heme b contacts are provided by Glu387 and His482. 7 disulfide bridges follow: Cys586-Cys643, Cys684-Cys709, Cys730-Cys770, Cys756-Cys782, Cys788-Cys802, Cys796-Cys811, and Cys813-Cys826. An N-linked (GlcNAc...) asparagine glycan is attached at Asn603. The region spanning 728–783 (DKCVFPEEVDNGNFVHCEESGKLVLVYSCFHGYKLQGQEQVTCTQKGWDSEPPVCK) is the Sushi domain. Residues 784–827 (DVNECADLTHPPCHPSAQCKNTKGSFQCVCTDPYVLGEDEKTCI) form the EGF-like; calcium-binding domain. A helical transmembrane segment spans residues 835 to 859 (ASWVSIALGALLIGGLASLTWIVIC). Residues 860–914 (RWTHADKKATLPITERVTTQSGCRKSQGRGISPHKAAAQDTGQEPASGSRVLLCE) lie on the Cytoplasmic side of the membrane. Positions 881 to 909 (GCRKSQGRGISPHKAAAQDTGQEPASGSR) are disordered.

The protein belongs to the peroxidase family. XPO subfamily. Interacts with DUOX1, DUOX2 and CYBA. Requires Ca(2+) as cofactor. Heme b is required as a cofactor. In terms of processing, heme is covalently bound through a H(2)O(2)-dependent autocatalytic process. Heme insertion is important for the delivery of protein at the cell surface. Post-translationally, cleaved in its N-terminal part.

Its subcellular location is the membrane. The enzyme catalyses 2 iodide + H2O2 + 2 H(+) = diiodine + 2 H2O. The catalysed reaction is [thyroglobulin]-L-tyrosine + iodide + H2O2 + H(+) = [thyroglobulin]-3-iodo-L-tyrosine + 2 H2O. It catalyses the reaction [thyroglobulin]-3-iodo-L-tyrosine + iodide + H2O2 + H(+) = [thyroglobulin]-3,5-diiodo-L-tyrosine + 2 H2O. It carries out the reaction 2 [thyroglobulin]-3,5-diiodo-L-tyrosine + H2O2 = [thyroglobulin]-L-thyroxine + [thyroglobulin]-dehydroalanine + 2 H2O. The enzyme catalyses [thyroglobulin]-3-iodo-L-tyrosine + [thyroglobulin]-3,5-diiodo-L-tyrosine + H2O2 = [thyroglobulin]-3,3',5-triiodo-L-thyronine + [thyroglobulin]-dehydroalanine + 2 H2O. The protein operates within hormone biosynthesis; thyroid hormone biosynthesis. Its function is as follows. Iodination and coupling of the hormonogenic tyrosines in thyroglobulin to yield the thyroid hormones T(3) and T(4). This chain is Thyroid peroxidase (Tpo), found in Mus musculus (Mouse).